We begin with the raw amino-acid sequence, 256 residues long: Proteasome subunit alpha (256 aa).

Residues Leu-226–Ser-256 form a disordered region. The segment covering Gly-245 to Ser-256 has biased composition (basic and acidic residues).

This sequence belongs to the peptidase T1A family. As to quaternary structure, the 20S proteasome core is composed of 14 alpha and 14 beta subunits that assemble into four stacked heptameric rings, resulting in a barrel-shaped structure. The two inner rings, each composed of seven catalytic beta subunits, are sandwiched by two outer rings, each composed of seven alpha subunits. The catalytic chamber with the active sites is on the inside of the barrel. Has a gated structure, the ends of the cylinder being occluded by the N-termini of the alpha-subunits. Is capped by the proteasome-associated ATPase, ARC.

The protein resides in the cytoplasm. It functions in the pathway protein degradation; proteasomal Pup-dependent pathway. With respect to regulation, the formation of the proteasomal ATPase ARC-20S proteasome complex, likely via the docking of the C-termini of ARC into the intersubunit pockets in the alpha-rings, may trigger opening of the gate for substrate entry. Interconversion between the open-gate and close-gate conformations leads to a dynamic regulation of the 20S proteasome proteolysis activity. In terms of biological role, component of the proteasome core, a large protease complex with broad specificity involved in protein degradation. This is Proteasome subunit alpha from Saccharopolyspora erythraea (strain ATCC 11635 / DSM 40517 / JCM 4748 / NBRC 13426 / NCIMB 8594 / NRRL 2338).